Consider the following 546-residue polypeptide: NAD(P)H-quinone oxidoreductase chain 4 (546 aa).

14 consecutive transmembrane segments (helical) span residues 24-44 (FPWL…IPFF), 56-76 (FALS…INGF), 106-126 (ISMP…LAAW), 132-152 (PKLF…VFAV), 156-176 (LLFF…LAIW), 188-208 (FIIY…AMGF), 232-252 (ILCY…VPLH), 263-283 (TAPV…YALL), 297-317 (FAPL…LTSF), 326-346 (IAYS…SFSS), 352-372 (AMLQ…LVGA), 396-416 (FALW…SGFV), 437-457 (VVMA…LLSM), and 484-504 (VYII…PRLV).

This sequence belongs to the complex I subunit 4 family.

The protein localises to the cellular thylakoid membrane. It carries out the reaction a plastoquinone + NADH + (n+1) H(+)(in) = a plastoquinol + NAD(+) + n H(+)(out). The catalysed reaction is a plastoquinone + NADPH + (n+1) H(+)(in) = a plastoquinol + NADP(+) + n H(+)(out). Functionally, NDH-1 shuttles electrons from NAD(P)H, via FMN and iron-sulfur (Fe-S) centers, to quinones in the respiratory chain. The immediate electron acceptor for the enzyme in this species is believed to be plastoquinone. Couples the redox reaction to proton translocation (for every two electrons transferred, four hydrogen ions are translocated across the cytoplasmic membrane), and thus conserves the redox energy in a proton gradient. This is NAD(P)H-quinone oxidoreductase chain 4 from Prochlorococcus marinus (strain MIT 9515).